The chain runs to 248 residues: N-acylneuraminate-9-phosphatase (248 aa).

D12 serves as a coordination point for Mg(2+). 5 residues coordinate phosphate: L13, D14, T131, N132, and K164. D14 contacts Mg(2+). D189 contributes to the Mg(2+) binding site.

This sequence belongs to the HAD-like hydrolase superfamily. NANP family. The cofactor is Mg(2+).

The enzyme catalyses N-acetylneuraminate 9-phosphate + H2O = N-acetylneuraminate + phosphate. The catalysed reaction is N-glycoloylneuraminate 9-phosphate + H2O = N-glycoloylneuraminate + phosphate. It participates in amino-sugar metabolism; N-acetylneuraminate biosynthesis. With respect to regulation, inhibited by calcium. Inhibited by vanadate, sodium orthovanate and phosphonate. Catalyzes the dephosphorylation of N-acylneuraminate 9-phosphate (Neu5Ac-9-P) to sialic acid N-acetylneuraminic acid (Neu5Ac). May also use N-glycoloylneuraminate 9-phosphate as substrate. This chain is N-acylneuraminate-9-phosphatase, found in Mus musculus (Mouse).